A 260-amino-acid chain; its full sequence is Tropinone reductase 2 (260 aa).

Residue 18–41 (SRGIGYGIVEELASLGASVYTCSR) coordinates NADP(+). Ser146 provides a ligand contact to substrate. Residue Tyr159 is the Proton acceptor of the active site. Residue 192 to 196 (IATSL) participates in NADP(+) binding.

The protein belongs to the short-chain dehydrogenases/reductases (SDR) family. As to quaternary structure, homodimer.

The catalysed reaction is pseudotropine + NADP(+) = tropinone + NADPH + H(+). It functions in the pathway alkaloid biosynthesis; tropane alkaloid biosynthesis. In terms of biological role, catalyzes the stereospecific reduction of tropinone to pseudotropine. The polypeptide is Tropinone reductase 2 (TR2) (Datura stramonium (Jimsonweed)).